The sequence spans 151 residues: UPF0208 membrane protein PC1_2779 (151 aa).

Transmembrane regions (helical) follow at residues 46 to 66 (FGIR…IALG) and 69 to 89 (LGPA…GLWW).

Belongs to the UPF0208 family.

It is found in the cell inner membrane. The chain is UPF0208 membrane protein PC1_2779 from Pectobacterium carotovorum subsp. carotovorum (strain PC1).